The following is a 77-amino-acid chain: Large ribosomal subunit protein bL31 (77 aa).

Zn(2+)-binding residues include cysteine 16, cysteine 18, cysteine 37, and cysteine 40.

Belongs to the bacterial ribosomal protein bL31 family. Type A subfamily. Part of the 50S ribosomal subunit. The cofactor is Zn(2+).

Its function is as follows. Binds the 23S rRNA. This chain is Large ribosomal subunit protein bL31, found in Pseudomonas fluorescens (strain SBW25).